We begin with the raw amino-acid sequence, 335 residues long: 3-hydroxyproline 2-epimerase (335 aa).

The active-site Proton acceptor is the Cys91. Substrate is bound by residues 92-93, Asp251, and 256-257; these read GH and GS.

It belongs to the proline racemase family.

It carries out the reaction trans-3-hydroxy-L-proline = cis-3-hydroxy-D-proline. The catalysed reaction is trans-4-hydroxy-L-proline = cis-4-hydroxy-D-proline. In terms of biological role, catalyzes the epimerization of trans-3-hydroxy-L-proline (t3LHyp) to cis-3-hydroxy-D-proline (c3DHyp) in vitro. Can also catalyze the epimerization of trans-4-hydroxy-L-proline (t3LHyp) to cis-4-hydroxy-D-proline (c4DHyp), albeit with 3.6-fold lower efficiency. Displays no proline racemase activity. The sequence is that of 3-hydroxyproline 2-epimerase from Burkholderia multivorans (strain ATCC 17616 / 249).